Consider the following 147-residue polypeptide: Hemoglobin subunit beta (147 aa).

A Globin domain is found at 2 to 147 (EWTDAERSAI…VVSALCRQYH (146 aa)). 2 residues coordinate heme b: H63 and H92.

It belongs to the globin family. As to quaternary structure, heterotetramer of two alpha chains and two beta chains. In terms of tissue distribution, red blood cells.

In terms of biological role, involved in oxygen transport from gills to the various peripheral tissues. The chain is Hemoglobin subunit beta (hbb) from Carassius auratus (Goldfish).